The sequence spans 632 residues: MSASTSTSTAASQDACYISLLGLAEYFRTSQPPNIKKCIQCLQALFTFMPPSKVEARTHLQMGQILMAYTKNIDLARQHLEKAWSISEPLPNFDVKFDTASLLAQLHLQTDRNSHQAKAMLRRAVELSQNNVYWHCKLLLQLSQIHASDREYSLASELLAVGAESADEASATYLKVLFLLSRAMILMIERKTNDVLALLNSAGQIIDNNIPNPHQKEYLKVFFLVLQVCYYLALGQVKTVKPSLKQLQMSIQTIMAPNWPSDEAIFGANQLEMFVWLPKEQLYVLVYLVTVSHSMMAGYMDKAQKYTEKALTQIEKLKQQEDKPILSVFKVILLEHIVMCRMVMGNRELAIREIAAARDVCMAAPQRSLLRRHSAQLHCLIGLYSMSTNLFEHAERQFVVCVSETSERDLKLFANLNLAIIYLRTKRDTDLKQILDAVSTENTHTYSSQALMGGFYYVQGLHAFHKNSFHEAKRFLRETLKMANAEDLNRLTSCSLVLLSHVFLSIGNSKESMNMVTPAMQLASKIPDIHVQLWGSAILKDLHRMSKDVQHEKDAYANHVKYSENLIADQRKCVQSAHHELVNWFQGDPPVTSGPPAAPVLLMPESSVTASVPVIASTSAAMQPAGQYGQFY.

TPR repeat units follow at residues 453–486 and 493–526; these read GGFY…ANAE and SCSL…ASKI.

The protein belongs to the SCC4/mau-2 family. In terms of assembly, interacts with Nipped-B to form the cohesin loading complex.

It localises to the nucleus. Its subcellular location is the nucleoplasm. Its function is as follows. Required for association of the cohesin complex with chromatin during interphase. Plays a role in sister chromatid cohesion and normal progression through prometaphase. This chain is MAU2 chromatid cohesion factor homolog, found in Drosophila erecta (Fruit fly).